The primary structure comprises 374 residues: N5-carboxyaminoimidazole ribonucleotide synthase (374 aa).

Residues Arg-108, Lys-148, 153–159 (GYDGKGQ), 183–186 (EQFL), Glu-191, His-214, and 266–267 (NE) contribute to the ATP site. The ATP-grasp domain occupies 112–296 (KQTLQKAGSK…QFDTHILAVT (185 aa)).

It belongs to the PurK/PurT family. In terms of assembly, homodimer.

The enzyme catalyses 5-amino-1-(5-phospho-beta-D-ribosyl)imidazole + hydrogencarbonate + ATP = 5-carboxyamino-1-(5-phospho-D-ribosyl)imidazole + ADP + phosphate + 2 H(+). It participates in purine metabolism; IMP biosynthesis via de novo pathway; 5-amino-1-(5-phospho-D-ribosyl)imidazole-4-carboxylate from 5-amino-1-(5-phospho-D-ribosyl)imidazole (N5-CAIR route): step 1/2. In terms of biological role, catalyzes the ATP-dependent conversion of 5-aminoimidazole ribonucleotide (AIR) and HCO(3)(-) to N5-carboxyaminoimidazole ribonucleotide (N5-CAIR). This Staphylococcus haemolyticus (strain JCSC1435) protein is N5-carboxyaminoimidazole ribonucleotide synthase.